Reading from the N-terminus, the 83-residue chain is Toxin Aam1 (83 aa).

An N-terminal signal peptide occupies residues 1–19 (MNYLVMISLALLLMIGVES). In terms of domain architecture, LCN-type CS-alpha/beta spans 21–82 (RDGYIVYPHN…PIYDRSYKCY (62 aa)). Intrachain disulfides connect Cys31–Cys81, Cys35–Cys53, Cys39–Cys63, and Cys43–Cys65.

Belongs to the long (4 C-C) scorpion toxin superfamily. Sodium channel inhibitor family. Alpha subfamily. In terms of processing, the C-terminal basic residue is removed by a carboxypeptidase. Expressed by the venom gland.

It is found in the secreted. Alpha toxins bind voltage-independently at site-3 of sodium channels (Nav) and inhibit the inactivation of the activated channels, thereby blocking neuronal transmission. The sequence is that of Toxin Aam1 (H1) from Androctonus amoreuxi (African fattail scorpion).